Consider the following 142-residue polypeptide: MKLLIALFVLVNAVIAQNGYGQGGQGPYGGQGGFGGYGGLGGQAGFGGQIGFNGQGGVGGQLGVGQGGVSPGQGGFAAQGPPNQYQPGYGSPVGSGHFHGGNPVDAGYIHGNHHEYPEHHGDHHREHHEHHGHHEHHGHHRH.

Positions 1–16 are cleaved as a signal peptide; sequence MKLLIALFVLVNAVIA. Positions 65–77 are enriched in gly residues; it reads GQGGVSPGQGGFA. Positions 65 to 142 are disordered; that stretch reads GQGGVSPGQG…HHEHHGHHRH (78 aa). Positions 112-124 are enriched in basic and acidic residues; it reads NHHEYPEHHGDHH. Over residues 125–142 the composition is skewed to basic residues; sequence REHHEHHGHHEHHGHHRH.

The protein resides in the secreted. Functionally, likely to be involved in the establishment of the head. This Drosophila orena (Fruit fly) protein is Protein spalt-accessory (sala).